Consider the following 357-residue polypeptide: uncharacterized protein (357 aa).

A run of 3 helical transmembrane segments spans residues 21-41, 86-106, and 135-155; these read FIKI…LFSW, FFCL…CTLF, and GGFV…PVIF. Disordered stretches follow at residues 184–229 and 283–357; these read DKNK…AMSD and KAGS…NKRN. Low complexity predominate over residues 195–223; sequence TTNTTNFSGNGSSSSTTNATSSSSSQANN. Composition is skewed to basic and acidic residues over residues 305-314 and 322-337; these read KIEEYDNQKQ and KETN…EKET. The stretch at 305–337 forms a coiled coil; sequence KIEEYDNQKQEEEENEEKETNKQQTQKDDEKET. Residues 346–357 show a composition bias toward basic residues; that stretch reads KKSKKGKKNKRN.

Its subcellular location is the membrane. This is an uncharacterized protein from Dictyostelium discoideum (Social amoeba).